The chain runs to 155 residues: Transcription antitermination protein NusB (155 aa).

This sequence belongs to the NusB family.

Its function is as follows. Involved in transcription antitermination. Required for transcription of ribosomal RNA (rRNA) genes. Binds specifically to the boxA antiterminator sequence of the ribosomal RNA (rrn) operons. This Vibrio campbellii (strain ATCC BAA-1116) protein is Transcription antitermination protein NusB.